A 261-amino-acid polypeptide reads, in one-letter code: Acidic leucine-rich nuclear phosphoprotein 32 family member B (261 aa).

LRR repeat units lie at residues proline 16–glutamate 40, asparagine 43–proline 64, lysine 65–leucine 87, and asparagine 89–lysine 110. Lysine 86 bears the N6-acetyllysine mark. The LRRCT domain maps to cysteine 123–glutamate 161. A disordered region spans residues aspartate 149–aspartate 261. Residues aspartate 157–glutamate 243 are compositionally biased toward acidic residues. The residue at position 158 (serine 158) is a Phosphoserine. The segment covering serine 244–threonine 254 has biased composition (basic and acidic residues). The Nuclear localization signal motif lies at lysine 249–arginine 252. Threonine 254 is modified (phosphothreonine).

Belongs to the ANP32 family. In terms of assembly, interacts with histones H3 and H4. Interacts with KLF5; this interaction induces promoter region-specific histone incorporation and inhibition of histone acetylation by ANP32B. In terms of processing, some Glu residues are glycylated by TTLL8; a modification that generates a side chains of glycine on the gamma-carboxyl groups of specific glutamate residues. Post-translationally, directly cleaved by caspase-3/CASP3.

It is found in the nucleus. Its function is as follows. Multifunctional protein that is involved in the regulation of many processes including cell proliferation, apoptosis, cell cycle progression or transcription. Regulates the proliferation of neuronal stem cells, differentiation of leukemic cells and progression from G1 to S phase of the cell cycle. As negative regulator of caspase-3-dependent apoptosis, may act as an antagonist of ANP32A in regulating tissue homeostasis. Exhibits histone chaperone properties, able to recruit histones to certain promoters, thus regulating the transcription of specific genes. Also plays an essential role in the nucleocytoplasmic transport of specific mRNAs via the uncommon nuclear mRNA export receptor XPO1/CRM1. Participates in the regulation of adequate adaptive immune responses by acting on mRNA expression and cell proliferation. The protein is Acidic leucine-rich nuclear phosphoprotein 32 family member B (ANP32B) of Bos taurus (Bovine).